The following is a 272-amino-acid chain: 3-methyl-2-oxobutanoate hydroxymethyltransferase (272 aa).

2 residues coordinate Mg(2+): aspartate 52 and aspartate 91. 3-methyl-2-oxobutanoate contacts are provided by residues aspartate 52–serine 53, aspartate 91, and lysine 121. A Mg(2+)-binding site is contributed by glutamate 123. Glutamate 190 acts as the Proton acceptor in catalysis.

Belongs to the PanB family. As to quaternary structure, homodecamer; pentamer of dimers. The cofactor is Mg(2+).

It is found in the cytoplasm. It catalyses the reaction 3-methyl-2-oxobutanoate + (6R)-5,10-methylene-5,6,7,8-tetrahydrofolate + H2O = 2-dehydropantoate + (6S)-5,6,7,8-tetrahydrofolate. Its pathway is cofactor biosynthesis; (R)-pantothenate biosynthesis; (R)-pantoate from 3-methyl-2-oxobutanoate: step 1/2. Catalyzes the reversible reaction in which hydroxymethyl group from 5,10-methylenetetrahydrofolate is transferred onto alpha-ketoisovalerate to form ketopantoate. The protein is 3-methyl-2-oxobutanoate hydroxymethyltransferase of Christiangramia forsetii (strain DSM 17595 / CGMCC 1.15422 / KT0803) (Gramella forsetii).